The primary structure comprises 182 residues: UPF0149 protein PM1723 (182 aa).

Belongs to the UPF0149 family.

This Pasteurella multocida (strain Pm70) protein is UPF0149 protein PM1723.